The following is a 347-amino-acid chain: MSDAFKPLLAKLADGQTLDEDDAEQFFAACLRGEPTPAQVAAAVTAMRLRGETVGEITACARAMRRAAIHLDHPYEVIDVCGTGGDGLHTLNISTAVGFVAAGGGLKVAKHGNRAITSKSGTADVLAALGVNIDASLAQQRHALDTAGICFLFAQAHHGAMKHVSPIRQQLGFRTIFNLLGPLTNPAGAKRQVVGVSAHRFVEPVAKALGALGAERAWSVHGAGMDELTTTGETEVAEWRDGSLRLFTITPEAVGLPRAALADITGGDPAYNAAALTALLDGQKGAYRDIVMLNAAAAFLVADRVETLREGVELAGAVLDDGRAKAALAGLVAATNSETVPAQVTPA.

5-phospho-alpha-D-ribose 1-diphosphate is bound by residues glycine 82, 85–86 (GD), threonine 90, 92–95 (NIST), 110–118 (KHGNRAITS), and threonine 122. Glycine 82 contributes to the anthranilate binding site. Serine 94 serves as a coordination point for Mg(2+). Asparagine 113 is a binding site for anthranilate. Arginine 168 contributes to the anthranilate binding site. Residues aspartate 226 and glutamate 227 each contribute to the Mg(2+) site.

This sequence belongs to the anthranilate phosphoribosyltransferase family. As to quaternary structure, homodimer. The cofactor is Mg(2+).

It catalyses the reaction N-(5-phospho-beta-D-ribosyl)anthranilate + diphosphate = 5-phospho-alpha-D-ribose 1-diphosphate + anthranilate. It functions in the pathway amino-acid biosynthesis; L-tryptophan biosynthesis; L-tryptophan from chorismate: step 2/5. Its function is as follows. Catalyzes the transfer of the phosphoribosyl group of 5-phosphorylribose-1-pyrophosphate (PRPP) to anthranilate to yield N-(5'-phosphoribosyl)-anthranilate (PRA). This chain is Anthranilate phosphoribosyltransferase, found in Caulobacter sp. (strain K31).